Consider the following 218-residue polypeptide: Riboflavin kinase (218 aa).

Residues 1–27 (MRPDGPRDPVAGPDSGPEPPYPVRLSG) form a disordered region. Residues Thr44 and Asn46 each contribute to the Mg(2+) site. The Nucleophile role is filled by Glu120.

This sequence belongs to the flavokinase family. Zn(2+) is required as a cofactor. Requires Mg(2+) as cofactor.

It carries out the reaction riboflavin + ATP = FMN + ADP + H(+). It participates in cofactor biosynthesis; FMN biosynthesis; FMN from riboflavin (ATP route): step 1/1. Its function is as follows. Catalyzes the phosphorylation of riboflavin (vitamin B2) to form flavin mononucleotide (FMN) coenzyme. This Neosartorya fischeri (strain ATCC 1020 / DSM 3700 / CBS 544.65 / FGSC A1164 / JCM 1740 / NRRL 181 / WB 181) (Aspergillus fischerianus) protein is Riboflavin kinase (fmn1).